The sequence spans 872 residues: MKELSSAQIRQMWLDFWKSKGHCVEPSANLVPVNDPTLLWINSGVATLKKYFDGSVIPENPRITNAQKSIRTNDIENVGKTARHHTMFEMLGNFSIGDYFRDEAIEWGFELLTSPEWFDFPKDKLYMTYYPDDKDSYNRWIACGVEPSHLVPIEDNFWEIGAGPSGPDTEIFFDRGEDFDPENIGLRLLAEDIENDRYIEIWNIVLSQFNADPAVPRSEYKELPNKNIDTGAGLERLAAVMQGAKTNFETDLFMPIIREVEKLSGKTYDPDGDNMSFKVIADHIRALSFAIGDGALPGNEGRGYVLRRLLRRAVMHGRRLGINETFLYKLVPTVGQIMESYYPEVLEKRDFIEKIVKREEETFARTIDAGSGHLDSLLAQLKAEGKDTLEGKDIFKLYDTYGFPVELIEELAEDAGYKIDHEGFKSAMKEQQDRARAAVVKGGSMGMQNETLAGIVEESRFEYDTYSLESSLSVIIADNERTEAVSEGQALLVFAQTPFYAEMGGQVADTGRIKNDKGDTVAEVVDVQKAPNGQPLHTVNVLASLSVGTNYTLEINKERRLAVEKNHTATHLLHAALHNVIGEHATQAGSLNEEEFLRFDFTHFEAVSNEELRHIEQEVNEQIWNALTITTTETDVETAKEMGAMALFGEKYGKVVRVVQIGNYSVELCGGTHLNNSSEIGLFKIVKEEGIGSGTRRIIAVTGRQAFEAYRNQEDALKEIAATVKAPQLKDAAAKVQALSDSLRDLQKENAELKEKAAAAAAGDVFKDVQEAKGVRFIASQVDVADAGALRTFADNWKQKDYSDVLVLVAAIGEKVNVLVASKTKDVHAGNMIKELAPIVAGRGGGKPDMAMAGGSDASKIAELLAAVAETV.

His-567, His-571, Cys-669, and His-673 together coordinate Zn(2+).

This sequence belongs to the class-II aminoacyl-tRNA synthetase family. Zn(2+) serves as cofactor.

It is found in the cytoplasm. The catalysed reaction is tRNA(Ala) + L-alanine + ATP = L-alanyl-tRNA(Ala) + AMP + diphosphate. Its function is as follows. Catalyzes the attachment of alanine to tRNA(Ala) in a two-step reaction: alanine is first activated by ATP to form Ala-AMP and then transferred to the acceptor end of tRNA(Ala). Also edits incorrectly charged Ser-tRNA(Ala) and Gly-tRNA(Ala) via its editing domain. This Streptococcus pyogenes serotype M6 (strain ATCC BAA-946 / MGAS10394) protein is Alanine--tRNA ligase.